A 139-amino-acid chain; its full sequence is ATP synthase epsilon chain (139 aa).

Belongs to the ATPase epsilon chain family. As to quaternary structure, F-type ATPases have 2 components, CF(1) - the catalytic core - and CF(0) - the membrane proton channel. CF(1) has five subunits: alpha(3), beta(3), gamma(1), delta(1), epsilon(1). CF(0) has three main subunits: a, b and c.

The protein localises to the cell inner membrane. Functionally, produces ATP from ADP in the presence of a proton gradient across the membrane. This is ATP synthase epsilon chain (atpC) from Escherichia coli O157:H7.